The sequence spans 1512 residues: DNA polymerase (1512 aa).

The protein belongs to the DNA polymerase type-B family.

It is found in the host nucleus. The catalysed reaction is DNA(n) + a 2'-deoxyribonucleoside 5'-triphosphate = DNA(n+1) + diphosphate. The polypeptide is DNA polymerase (57/58) (Ictalurid herpesvirus 1 (strain Auburn) (IcHV-1)).